An 84-amino-acid chain; its full sequence is Beta-cardiotoxin CTX21 (84 aa).

Residues 1–21 (MKTLLLTLVVVTIVCLDLGYT) form the signal peptide. 4 cysteine pairs are disulfide-bonded: Cys24–Cys43, Cys36–Cys61, Cys65–Cys76, and Cys77–Cys82.

It belongs to the three-finger toxin family. Short-chain subfamily. Aminergic toxin sub-subfamily. Expressed by the venom gland.

It localises to the secreted. Functionally, acts as a beta-blocker by binding to beta-1 and beta-2 adrenergic receptors (ADRB1 and ADRB2). It dose-dependently decreases the heart rate (bradycardia), whereas conventional cardiotoxins increases it. At 100 mg/kg, intraperitoneal injection into mice provokes labored breathing, impaired locomotion, lack of response to external stimuli, and death (after 30 minutes). The sequence is that of Beta-cardiotoxin CTX21 from Ophiophagus hannah (King cobra).